The sequence spans 502 residues: Cytochrome P450 monooxygenase AacuE (502 aa).

The helical transmembrane segment at 4–26 threads the bilayer; that stretch reads AITGLVATVTTFLAYIVFLSYTP. N-linked (GlcNAc...) asparagine glycosylation is present at N393. A heme-binding site is contributed by C439.

Belongs to the cytochrome P450 family. Requires heme as cofactor.

The protein localises to the membrane. It participates in secondary metabolite biosynthesis. Cytochrome P450 monooxygenase; part of the gene cluster that mediates the biosynthesis of the tetrahydroxanthone dimer secalonic acid D. The pathway begins with the synthesis of atrochrysone thioester by the polyketide synthase AacuL. The atrochrysone carboxyl ACP thioesterase AacuM then breaks the thioester bond and releases the atrochrysone carboxylic acid from AacuL. Atrochrysone carboxylic acid is decarboxylated by the decarboxylase AacuI, and oxidized by the anthrone oxygenase AacuG to yield emodin. Emodin is then reduced to emodin hydroquinone by a yet unidentified oxidoreductase. A-ring reduction by the short chain dehydrogenase AacuN, dehydration by the scytalone dehydratase-like protein AacuK and probable spontaneous re-oxidation, results in overall deoxygenation to chrysophanol. Baeyer-Villiger oxidation by the Baeyer-Villiger monooxygenase (BVMO) AacuH then yields monodictyphenone. Monodictyphenone is transformed into compounds with the tetrahydroxanthone skeleton via methylesterification by the methyltransferase AacuQ, followed by the action of the flavin-dependent monooxygenase AacuC, the isomerase AacuP, and the short chain dehydrogenase/reductase AacuF or AacuD. AacuF and AacuD should accept the same compound as a substrate but perform the ketoreduction with a different stereoselectivity, thus yielding blennolides B and A, respectively. In the final step of the biosynthesis, the cytochrome P450 monooxygenase AacuE accepts blennolide B and/or blennolide A to conduct the dimerization reaction to furnish the tetrahydroxanthone dimers, secalonic acids D, B, and F. The polypeptide is Cytochrome P450 monooxygenase AacuE (Aspergillus aculeatus (strain ATCC 16872 / CBS 172.66 / WB 5094)).